We begin with the raw amino-acid sequence, 315 residues long: Methylglutaconyl-CoA hydratase, mitochondrial (315 aa).

A mitochondrion-targeting transit peptide spans 1–43 (MAAAAAPGALGALSAGRVRLVAACCARLGSAAWARGTAPRRGY). K76 carries the N6-acetyllysine; alternate modification. K76 is subject to N6-succinyllysine; alternate. The segment at 81–95 (KNLLKMLSKAVDALK) is RNA-binding. Position 85 is an N6-succinyllysine (K85). Residues K89 and K120 each carry the N6-acetyllysine; alternate modification. 2 positions are modified to N6-succinyllysine; alternate: K89 and K120. K124 and K136 each carry N6-succinyllysine. N6-acetyllysine; alternate occurs at positions 180 and 187. N6-succinyllysine; alternate occurs at positions 180 and 187. K305 carries the N6-succinyllysine modification.

It belongs to the enoyl-CoA hydratase/isomerase family. As to quaternary structure, homohexamer.

The protein resides in the mitochondrion. It carries out the reaction (3S)-3-hydroxy-3-methylglutaryl-CoA = 3-methyl-(2E)-glutaconyl-CoA + H2O. It catalyses the reaction (3S)-citramalyl-CoA = itaconyl-CoA + H2O. The enzyme catalyses 3-hydroxyisovaleryl-CoA = 3-methylbut-2-enoyl-CoA + H2O. The catalysed reaction is (S)-3-hydroxyglutaryl-CoA = (2E)-glutaconyl-CoA + H2O. The protein operates within amino-acid degradation; L-leucine degradation; (S)-3-hydroxy-3-methylglutaryl-CoA from 3-isovaleryl-CoA: step 3/3. Functionally, catalyzes the fifth step in the leucine degradation pathway, the reversible hydration of 3-methylglutaconyl-CoA (3-MG-CoA) to 3-hydroxy-3-methylglutaryl-CoA (HMG-CoA). Can catalyze the reverse reaction but at a much lower rate in vitro. HMG-CoA is then quickly degraded by another enzyme (such as HMG-CoA lyase) to give acetyl-CoA and acetoacetate. Uses other substrates such as (2E)-glutaconyl-CoA efficiently in vitro, and to a lesser extent 3-methylcrotonyl-CoA (3-methyl-(2E)-butenoyl-CoA), crotonyl-CoA ((2E)-butenoyl-CoA) and 3-hydroxybutanoyl-CoA (the missing carboxylate reduces affinity to the active site). Originally it was identified as an RNA-binding protein as it binds to AU-rich elements (AREs) in vitro. AREs direct rapid RNA degradation and mRNA deadenylation. Might have itaconyl-CoA hydratase activity, converting itaconyl-CoA into citramalyl-CoA in the C5-dicarboxylate catabolism pathway. The C5-dicarboxylate catabolism pathway is required to detoxify itaconate, an antimicrobial metabolite and immunomodulator produced by macrophages during certain infections, that can act as a vitamin B12-poisoning metabolite. The protein is Methylglutaconyl-CoA hydratase, mitochondrial of Rattus norvegicus (Rat).